The sequence spans 318 residues: AT-hook motif nuclear-localized protein 7 (318 aa).

2 disordered regions span residues 1–76 (METS…PSSS) and 241–318 (SDQQ…LPVD). The short motif at 56 to 64 (KKRRGRPRK) is the Bipartite nuclear localization signal element. The segment at residues 56–68 (KKRRGRPRKYEAN) is a DNA-binding region (a.T hook). One can recognise a PPC domain in the interval 120 to 259 (GSNFTPHVIT…RKQRVEHAPA (140 aa)). Over residues 243-256 (QQDHQKPRKQRVEH) the composition is skewed to basic and acidic residues. Pro residues predominate over residues 264 to 274 (VPPPPSPPPPA). Positions 288-312 (PPSSFGISSWTNGQDMPRNSATDIN) are enriched in polar residues.

Its subcellular location is the nucleus. Its function is as follows. Transcription factor that specifically binds AT-rich DNA sequences related to the nuclear matrix attachment regions (MARs). In Arabidopsis thaliana (Mouse-ear cress), this protein is AT-hook motif nuclear-localized protein 7.